Consider the following 480-residue polypeptide: Cysteine--tRNA ligase (480 aa).

Zn(2+) is bound at residue cysteine 27. A 'HIGH' region motif is present at residues 29 to 39; it reads PTVYNYAHIGN. 3 residues coordinate Zn(2+): cysteine 221, histidine 246, and glutamate 250. The short motif at 278–282 is the 'KMSKS' region element; sequence KMSKS. Lysine 281 serves as a coordination point for ATP.

The protein belongs to the class-I aminoacyl-tRNA synthetase family. As to quaternary structure, monomer. It depends on Zn(2+) as a cofactor.

The protein resides in the cytoplasm. The catalysed reaction is tRNA(Cys) + L-cysteine + ATP = L-cysteinyl-tRNA(Cys) + AMP + diphosphate. The sequence is that of Cysteine--tRNA ligase from Borreliella burgdorferi (strain ZS7) (Borrelia burgdorferi).